We begin with the raw amino-acid sequence, 64 residues long: Frontoxin IV (64 aa).

5 cysteine pairs are disulfide-bonded: cysteine 3–cysteine 24, cysteine 6–cysteine 11, cysteine 17–cysteine 41, cysteine 45–cysteine 57, and cysteine 58–cysteine 63.

In terms of tissue distribution, expressed by the venom gland.

The protein resides in the secreted. Functionally, produces peripheral paralysis by blocking neuromuscular transmission at the postsynaptic site. Binds to the muscular nicotinic acetylcholine receptor (nAChR). This Micrurus frontalis (Coral snake) protein is Frontoxin IV.